The following is a 413-amino-acid chain: Peptidase T (413 aa).

A Zn(2+)-binding site is contributed by His-81. The active site involves Asp-83. Asp-143 provides a ligand contact to Zn(2+). Glu-178 acts as the Proton acceptor in catalysis. Zn(2+)-binding residues include Glu-179, Asp-201, and His-383.

It belongs to the peptidase M20B family. Requires Zn(2+) as cofactor.

Its subcellular location is the cytoplasm. The enzyme catalyses Release of the N-terminal residue from a tripeptide.. Its function is as follows. Cleaves the N-terminal amino acid of tripeptides. The protein is Peptidase T of Lactococcus lactis subsp. hordniae.